The primary structure comprises 289 residues: ATP synthase gamma chain (289 aa).

This sequence belongs to the ATPase gamma chain family. F-type ATPases have 2 components, CF(1) - the catalytic core - and CF(0) - the membrane proton channel. CF(1) has five subunits: alpha(3), beta(3), gamma(1), delta(1), epsilon(1). CF(0) has three main subunits: a, b and c.

Its subcellular location is the cell inner membrane. Functionally, produces ATP from ADP in the presence of a proton gradient across the membrane. The gamma chain is believed to be important in regulating ATPase activity and the flow of protons through the CF(0) complex. This chain is ATP synthase gamma chain, found in Erwinia tasmaniensis (strain DSM 17950 / CFBP 7177 / CIP 109463 / NCPPB 4357 / Et1/99).